The primary structure comprises 237 residues: 2,3,4,5-tetrahydropyridine-2,6-dicarboxylate N-acetyltransferase (237 aa).

It belongs to the transferase hexapeptide repeat family. DapH subfamily.

The enzyme catalyses (S)-2,3,4,5-tetrahydrodipicolinate + acetyl-CoA + H2O = L-2-acetamido-6-oxoheptanedioate + CoA. Its pathway is amino-acid biosynthesis; L-lysine biosynthesis via DAP pathway; LL-2,6-diaminopimelate from (S)-tetrahydrodipicolinate (acetylase route): step 1/3. Catalyzes the transfer of an acetyl group from acetyl-CoA to tetrahydrodipicolinate. This chain is 2,3,4,5-tetrahydropyridine-2,6-dicarboxylate N-acetyltransferase, found in Limosilactobacillus fermentum (strain NBRC 3956 / LMG 18251) (Lactobacillus fermentum).